The sequence spans 692 residues: Elongation factor G (692 aa).

Residues 8-282 enclose the tr-type G domain; the sequence is ERTRNIGIMA…AIVDYLPAPT (275 aa). GTP contacts are provided by residues 17–24, 81–85, and 135–138; these read AHIDAGKT, DTPGH, and NKMD.

The protein belongs to the TRAFAC class translation factor GTPase superfamily. Classic translation factor GTPase family. EF-G/EF-2 subfamily.

The protein resides in the cytoplasm. Functionally, catalyzes the GTP-dependent ribosomal translocation step during translation elongation. During this step, the ribosome changes from the pre-translocational (PRE) to the post-translocational (POST) state as the newly formed A-site-bound peptidyl-tRNA and P-site-bound deacylated tRNA move to the P and E sites, respectively. Catalyzes the coordinated movement of the two tRNA molecules, the mRNA and conformational changes in the ribosome. This Desulforamulus reducens (strain ATCC BAA-1160 / DSM 100696 / MI-1) (Desulfotomaculum reducens) protein is Elongation factor G.